A 306-amino-acid chain; its full sequence is Serine/threonine-protein kinase mug51 (306 aa).

It belongs to the STK19 family.

It catalyses the reaction L-seryl-[protein] + ATP = O-phospho-L-seryl-[protein] + ADP + H(+). The catalysed reaction is L-threonyl-[protein] + ATP = O-phospho-L-threonyl-[protein] + ADP + H(+). Serine/threonine-protein kinase. Has a role in meiosis. This is Serine/threonine-protein kinase mug51 (mug51) from Schizosaccharomyces pombe (strain 972 / ATCC 24843) (Fission yeast).